The primary structure comprises 378 residues: Succinyl-diaminopimelate desuccinylase (378 aa).

His68 contributes to the Zn(2+) binding site. The active site involves Asp70. Asp101 contacts Zn(2+). Glu135 acts as the Proton acceptor in catalysis. 3 residues coordinate Zn(2+): Glu136, Glu164, and His350.

This sequence belongs to the peptidase M20A family. DapE subfamily. As to quaternary structure, homodimer. Zn(2+) is required as a cofactor. Co(2+) serves as cofactor.

The catalysed reaction is N-succinyl-(2S,6S)-2,6-diaminopimelate + H2O = (2S,6S)-2,6-diaminopimelate + succinate. Its pathway is amino-acid biosynthesis; L-lysine biosynthesis via DAP pathway; LL-2,6-diaminopimelate from (S)-tetrahydrodipicolinate (succinylase route): step 3/3. Functionally, catalyzes the hydrolysis of N-succinyl-L,L-diaminopimelic acid (SDAP), forming succinate and LL-2,6-diaminopimelate (DAP), an intermediate involved in the bacterial biosynthesis of lysine and meso-diaminopimelic acid, an essential component of bacterial cell walls. The protein is Succinyl-diaminopimelate desuccinylase of Acinetobacter baumannii (strain ATCC 17978 / DSM 105126 / CIP 53.77 / LMG 1025 / NCDC KC755 / 5377).